A 76-amino-acid polypeptide reads, in one-letter code: Small ribosomal subunit protein bS18 (76 aa).

It belongs to the bacterial ribosomal protein bS18 family. As to quaternary structure, part of the 30S ribosomal subunit. Forms a tight heterodimer with protein bS6.

In terms of biological role, binds as a heterodimer with protein bS6 to the central domain of the 16S rRNA, where it helps stabilize the platform of the 30S subunit. The chain is Small ribosomal subunit protein bS18 from Xanthomonas euvesicatoria pv. vesicatoria (strain 85-10) (Xanthomonas campestris pv. vesicatoria).